The chain runs to 294 residues: Phosphate acetyltransferase (294 aa).

This sequence belongs to the phosphate acetyltransferase and butyryltransferase family. In terms of assembly, homotetramer.

Its subcellular location is the cytoplasm. The enzyme catalyses acetyl-CoA + phosphate = acetyl phosphate + CoA. Its pathway is metabolic intermediate biosynthesis; acetyl-CoA biosynthesis; acetyl-CoA from acetate: step 2/2. Functionally, in addition to acetyl-CoA (100%), the enzyme accepts propionyl-CoA (60%) and butyryl-CoA (30%). The polypeptide is Phosphate acetyltransferase (pta) (Thermotoga maritima (strain ATCC 43589 / DSM 3109 / JCM 10099 / NBRC 100826 / MSB8)).